The chain runs to 372 residues: Tribbles homolog 1 (372 aa).

2 disordered regions span residues 1-26 and 49-85; these read MRVG…FPAA and RLSE…CVSS. Over residues 59–74 the composition is skewed to pro residues; it reads YLSPPGSPCSPQPPPS. A Protein kinase domain is found at 91 to 338; the sequence is IADYLLLPLA…APQILLHPWF (248 aa). The COP1-binding signature appears at 355-360; it reads DQIVPE.

It belongs to the protein kinase superfamily. CAMK Ser/Thr protein kinase family. Tribbles subfamily. As to quaternary structure, monomer. Interacts (via protein kinase domain) with CEBPA. Interacts with COP1.

In terms of biological role, adapter protein involved in protein degradation by interacting with COP1 ubiquitin ligase. Promotes CEBPA degradation and inhibits its function. Controls macrophage, eosinophil and neutrophil differentiation via the COP1-binding domain. Regulates myeloid cell differentiation by altering the expression of CEBPA in a COP1-dependent manner. Interacts with MAPK kinases and regulates activation of MAP kinases, but has no kinase activity. In Mus musculus (Mouse), this protein is Tribbles homolog 1.